We begin with the raw amino-acid sequence, 140 residues long: Trafficking protein particle complex subunit 2-like protein (140 aa).

It belongs to the TRAPP small subunits family. Sedlin subfamily.

This is Trafficking protein particle complex subunit 2-like protein (trappc2l) from Dictyostelium discoideum (Social amoeba).